The sequence spans 194 residues: Large ribosomal subunit protein bL12m (194 aa).

Residues 1-33 (MSLRILAKRSSSIWMKTRVTPALISPITITTRF) constitute a mitochondrion transit peptide. N-linked (GlcNAc...) asparagine glycosylation is present at Asn34. A disordered region spans residues 101 to 120 (AGNVPSSTGEAGSGAEEEAK). A compositionally biased stretch (low complexity) spans 105–114 (PSSTGEAGSG).

It belongs to the bacterial ribosomal protein bL12 family. As to quaternary structure, component of the mitochondrial large ribosomal subunit (mt-LSU). Mature yeast 74S mitochondrial ribosomes consist of a small (37S) and a large (54S) subunit. The 37S small subunit contains a 15S ribosomal RNA (15S mt-rRNA) and 34 different proteins. The 54S large subunit contains a 21S rRNA (21S mt-rRNA) and 46 different proteins. In terms of processing, N-glycosylated.

It is found in the mitochondrion. In terms of biological role, component of the mitochondrial ribosome (mitoribosome), a dedicated translation machinery responsible for the synthesis of mitochondrial genome-encoded proteins, including at least some of the essential transmembrane subunits of the mitochondrial respiratory chain. The mitoribosomes are attached to the mitochondrial inner membrane and translation products are cotranslationally integrated into the membrane. The polypeptide is Large ribosomal subunit protein bL12m (MNP1) (Saccharomyces cerevisiae (strain ATCC 204508 / S288c) (Baker's yeast)).